We begin with the raw amino-acid sequence, 307 residues long: GTPase Era (307 aa).

Residues 17-186 (RCGFVAIVGR…LELLKPYLPE (170 aa)) form the Era-type G domain. The interval 25 to 32 (GRPNVGKS) is G1. 25 to 32 (GRPNVGKS) provides a ligand contact to GTP. The segment at 51 to 55 (QTTRN) is G2. The segment at 72-75 (DTPG) is G3. Residues 72-76 (DTPGF) and 133-136 (NKID) contribute to the GTP site. The interval 133–136 (NKID) is G4. Residues 165 to 167 (VSA) are G5. The region spanning 217–293 (LGEELPYAMN…FLKVWVKVKS (77 aa)) is the KH type-2 domain.

It belongs to the TRAFAC class TrmE-Era-EngA-EngB-Septin-like GTPase superfamily. Era GTPase family. In terms of assembly, monomer.

It is found in the cytoplasm. It localises to the cell inner membrane. In terms of biological role, an essential GTPase that binds both GDP and GTP, with rapid nucleotide exchange. Plays a role in 16S rRNA processing and 30S ribosomal subunit biogenesis and possibly also in cell cycle regulation and energy metabolism. In Neisseria meningitidis serogroup C / serotype 2a (strain ATCC 700532 / DSM 15464 / FAM18), this protein is GTPase Era.